The sequence spans 264 residues: ELL-associated factor 2 (264 aa).

Disordered regions lie at residues 114-154 (EGSS…PSSP) and 169-264 (MDQL…DSDD). The span at 117 to 142 (SKVQSRIEQQQQQIRNSSKTPNNIKN) shows a compositional bias: polar residues. Positions 173-196 (SSSDSSSDSKSSSSSSSSSENSSS) are enriched in low complexity. Over residues 228-238 (VPDKDASHNRS) the composition is skewed to basic and acidic residues. Polar residues predominate over residues 239 to 264 (QENSGHMMNTLRSDLQLSESGSDSDD).

Belongs to the EAF family.

The protein resides in the nucleus speckle. May act as a transcriptional transactivator. The sequence is that of ELL-associated factor 2 (EAF2) from Gallus gallus (Chicken).